Reading from the N-terminus, the 422-residue chain is RNA exonuclease 4 (422 aa).

The tract at residues 1 to 194 (MGKAKVPASK…APAPPTEEDI (194 aa)) is disordered. S15 carries the phosphoserine modification. A compositionally biased stretch (basic residues) spans 26 to 40 (LTRKKNKKKKRFWKS). Phosphoserine occurs at positions 96 and 111. Composition is skewed to basic and acidic residues over residues 106–127 (NKKE…DQEA) and 151–176 (GTEH…DIEH). A Glycyl lysine isopeptide (Lys-Gly) (interchain with G-Cter in SUMO2) cross-link involves residue K115. The 152-residue stretch at 243-394 (ALALDCEMVG…QDAQAAMRLY (152 aa)) folds into the Exonuclease domain.

Belongs to the REXO4 family. Can bind ESR1 and ESR2. This interaction is abrogated by estrogen and augmented by tamoxifen treatment.

The protein localises to the nucleus. It localises to the nucleolus. In Homo sapiens (Human), this protein is RNA exonuclease 4 (REXO4).